Consider the following 504-residue polypeptide: AMP phosphorylase 1 (504 aa).

Residues Gly169, 195-200, and Thr204 contribute to the AMP site; that span reads SRAITS. Catalysis depends on Asp257, which acts as the Proton donor. Ser265 and Lys289 together coordinate AMP.

It belongs to the thymidine/pyrimidine-nucleoside phosphorylase family. Type 2 subfamily.

It carries out the reaction AMP + phosphate = alpha-D-ribose 1,5-bisphosphate + adenine. It catalyses the reaction CMP + phosphate = cytosine + alpha-D-ribose 1,5-bisphosphate. The enzyme catalyses UMP + phosphate = alpha-D-ribose 1,5-bisphosphate + uracil. Catalyzes the conversion of AMP and phosphate to adenine and ribose 1,5-bisphosphate (R15P). Exhibits phosphorylase activity toward CMP and UMP in addition to AMP. Functions in an archaeal AMP degradation pathway, together with R15P isomerase and RubisCO. This is AMP phosphorylase 1 from Archaeoglobus fulgidus (strain ATCC 49558 / DSM 4304 / JCM 9628 / NBRC 100126 / VC-16).